Consider the following 346-residue polypeptide: Ferredoxin--NADP reductase (346 aa).

FAD-binding residues include E35, Q43, Y48, V88, F122, D287, and T327.

The protein belongs to the ferredoxin--NADP reductase type 2 family. Homodimer. FAD serves as cofactor.

The catalysed reaction is 2 reduced [2Fe-2S]-[ferredoxin] + NADP(+) + H(+) = 2 oxidized [2Fe-2S]-[ferredoxin] + NADPH. The protein is Ferredoxin--NADP reductase of Oenococcus oeni (strain ATCC BAA-331 / PSU-1).